We begin with the raw amino-acid sequence, 502 residues long: Lysine--tRNA ligase (502 aa).

Mg(2+) contacts are provided by E413 and E420.

Belongs to the class-II aminoacyl-tRNA synthetase family. In terms of assembly, homodimer. It depends on Mg(2+) as a cofactor.

The protein resides in the cytoplasm. The catalysed reaction is tRNA(Lys) + L-lysine + ATP = L-lysyl-tRNA(Lys) + AMP + diphosphate. The polypeptide is Lysine--tRNA ligase (Haemophilus influenzae (strain PittEE)).